We begin with the raw amino-acid sequence, 349 residues long: Phosphate acyltransferase (349 aa).

Belongs to the PlsX family. Homodimer. Probably interacts with PlsY.

It is found in the cytoplasm. The enzyme catalyses a fatty acyl-[ACP] + phosphate = an acyl phosphate + holo-[ACP]. It participates in lipid metabolism; phospholipid metabolism. Functionally, catalyzes the reversible formation of acyl-phosphate (acyl-PO(4)) from acyl-[acyl-carrier-protein] (acyl-ACP). This enzyme utilizes acyl-ACP as fatty acyl donor, but not acyl-CoA. This chain is Phosphate acyltransferase, found in Rhodospirillum rubrum (strain ATCC 11170 / ATH 1.1.1 / DSM 467 / LMG 4362 / NCIMB 8255 / S1).